The sequence spans 219 residues: UPF0502 protein Swoo_2055 (219 aa).

The segment at 167 to 195 (QVKGESVPISEHSRSQREAPSKRQDEMDE) is disordered. The segment covering 177–191 (EHSRSQREAPSKRQD) has biased composition (basic and acidic residues).

Belongs to the UPF0502 family.

This Shewanella woodyi (strain ATCC 51908 / MS32) protein is UPF0502 protein Swoo_2055.